Reading from the N-terminus, the 1530-residue chain is Coiled-coil domain-containing protein 141 (1530 aa).

One copy of the Spectrin repeat lies at 49 to 127; that stretch reads NLLEIGSSQD…SMLERRRELL (79 aa). Thr91 is subject to Phosphothreonine. 3 coiled-coil regions span residues 220–251, 758–785, and 865–967; these read IDSL…VLQL, LKEK…YEEI, and AKSL…VNKK. 4 disordered regions span residues 1153–1240, 1259–1285, 1324–1356, and 1369–1403; these read SEER…PASS, LGKA…DTFT, PREV…SNVT, and SPGL…SVVS. The segment covering 1334–1345 has biased composition (polar residues); it reads PSSQAQEISLGT. The region spanning 1409 to 1497 is the Ig-like domain; it reads PHFSRLLSNV…GTLSSKAILH (89 aa).

As to quaternary structure, interacts with DISC1. Interacts preferentially with phosphorylated forms of myosin regulatory light chain (MRLC). Interacts (via the N-terminal region) with HDAC6; inhibits the deacetylase activity of HDAC6. Interacts with KIBRA (via the C-terminal region); retains AMPAR in the cytosol after internalization. In terms of processing, ubiquitinated and degradated by the CDC20-APC/C pathway. During brain development, CDC20-APC/C complex degrades CCDC141 after centrosome translocation into the dilated area. CCDC141 is restabilized in the dilation until the centrosome enters the dilation, at which point it is once again immediately destabilized by CDC20-APC/C complex. The oscillatory regulation of CCDC141 protein is needed for proper cortical migration. Phosphorylation at Thr-91 by PLK1 affects CCDC141 degradation.

The protein resides in the cytoplasm. It localises to the cytoskeleton. The protein localises to the microtubule organizing center. Its subcellular location is the centrosome. In terms of biological role, plays a critical role in cortical radial and GnRH neurons migration during brain development. Regulates cortical radial migration by negatively controlling the activity of histone deacetylase 6 (HDAC6) and promotes centrosome maturation. CAMDI is required for dilation formation of cortical neurons during radial migration. Plays a critical role in learning and memory performance through regulation of AMPA-selective glutamate receptors (AMPARs) cell surface expression in competition with KIBRA. This is Coiled-coil domain-containing protein 141 from Rattus norvegicus (Rat).